Reading from the N-terminus, the 337-residue chain is Vacuolar protein sorting-associated protein 26B-B (337 aa).

The disordered stretch occupies residues 313–337 (RFEGTSHPETRPQHSGAAALEQEHE).

Belongs to the VPS26 family. In terms of assembly, component of the heterotrimeric retromer cargo-selective complex (CSC) which is believed to associate with variable sorting nexins to form functionally distinct retromer complex variants.

The protein localises to the cytoplasm. Its subcellular location is the membrane. It is found in the endosome. In terms of biological role, acts as a component of the retromer cargo-selective complex (CSC). The CSC is believed to be the core functional component of retromer or respective retromer complex variants acting to prevent missorting of selected transmembrane cargo proteins into the lysosomal degradation pathway. Retromer mediates retrograde transport of cargo proteins from endosomes to the trans-Golgi network (TGN). This chain is Vacuolar protein sorting-associated protein 26B-B (vps26b-b), found in Xenopus laevis (African clawed frog).